The chain runs to 93 residues: Large ribosomal subunit protein uL23 (93 aa).

This sequence belongs to the universal ribosomal protein uL23 family. In terms of assembly, part of the 50S ribosomal subunit. Contacts protein L29, and trigger factor when it is bound to the ribosome.

One of the early assembly proteins it binds 23S rRNA. One of the proteins that surrounds the polypeptide exit tunnel on the outside of the ribosome. Forms the main docking site for trigger factor binding to the ribosome. The protein is Large ribosomal subunit protein uL23 of Wolinella succinogenes (strain ATCC 29543 / DSM 1740 / CCUG 13145 / JCM 31913 / LMG 7466 / NCTC 11488 / FDC 602W) (Vibrio succinogenes).